The primary structure comprises 611 residues: Rho GTPase-activating protein gacN (611 aa).

The Rho-GAP domain occupies 24–219 (KTFKKILKPG…VLIEEFHVLY (196 aa)). A coiled-coil region spans residues 236 to 499 (IREDKRSTSE…TKLQKSSSSS (264 aa)). Basic and acidic residues predominate over residues 476–491 (NQLEKEKSKLQDELTK). A disordered region spans residues 476 to 550 (NQLEKEKSKL…TTPPPPLDED (75 aa)). Low complexity-rich tracts occupy residues 495–509 (SSSSSSSSSSSSSSS) and 527–540 (TTTTTTTTSPAQQP).

It is found in the cytoplasm. Its function is as follows. Rho GTPase-activating protein involved in the signal transduction pathway. The chain is Rho GTPase-activating protein gacN (gacN) from Dictyostelium discoideum (Social amoeba).